The chain runs to 282 residues: Snake venom serine protease BmSP (282 aa).

The signal sequence occupies residues 1-18 (MVLIGVLASLLILQLSYS). Positions 19-56 (KSLDDGAKESAYDDEIQQSSWGNSTVNTTLTETVVIQL) are excised as a propeptide. N-linked (GlcNAc...) asparagine glycans are attached at residues asparagine 41 and asparagine 45. Residues 57–280 (IMGGSECYKS…YIDWIKGIIA (224 aa)) enclose the Peptidase S1 domain. 5 disulfide bridges follow: cysteine 63–cysteine 195, cysteine 82–cysteine 98, cysteine 174–cysteine 241, cysteine 206–cysteine 220, and cysteine 231–cysteine 256. Histidine 97 (charge relay system) is an active-site residue. A glycan (N-linked (GlcNAc...) asparagine) is linked at asparagine 135. Aspartate 142 functions as the Charge relay system in the catalytic mechanism. 2 N-linked (GlcNAc...) asparagine glycosylation sites follow: asparagine 149 and asparagine 153. The active-site Charge relay system is serine 235.

Belongs to the peptidase S1 family. Snake venom subfamily. In terms of assembly, monomer. In terms of tissue distribution, expressed by the venom gland.

It is found in the secreted. Its function is as follows. Snake venom serine protease that may act in the hemostasis system of the prey. This is Snake venom serine protease BmSP from Bungarus multicinctus (Many-banded krait).